The primary structure comprises 202 residues: Holliday junction branch migration complex subunit RuvA (202 aa).

The segment at 1-64 (MIDYVSGTLV…EDDESLYGFA (64 aa)) is domain I. Residues 65-143 (TKAERTVFET…DLDVLEDTSP (79 aa)) form a domain II region. The tract at residues 144 to 149 (LSGGSD) is flexible linker. The interval 150-202 (ARAEARADALEALTELGLSKADAERSIRQVLRDNAGIQSADELVRRALKADQE) is domain III.

Belongs to the RuvA family. Homotetramer. Forms an RuvA(8)-RuvB(12)-Holliday junction (HJ) complex. HJ DNA is sandwiched between 2 RuvA tetramers; dsDNA enters through RuvA and exits via RuvB. An RuvB hexamer assembles on each DNA strand where it exits the tetramer. Each RuvB hexamer is contacted by two RuvA subunits (via domain III) on 2 adjacent RuvB subunits; this complex drives branch migration. In the full resolvosome a probable DNA-RuvA(4)-RuvB(12)-RuvC(2) complex forms which resolves the HJ.

Its subcellular location is the cytoplasm. The RuvA-RuvB-RuvC complex processes Holliday junction (HJ) DNA during genetic recombination and DNA repair, while the RuvA-RuvB complex plays an important role in the rescue of blocked DNA replication forks via replication fork reversal (RFR). RuvA specifically binds to HJ cruciform DNA, conferring on it an open structure. The RuvB hexamer acts as an ATP-dependent pump, pulling dsDNA into and through the RuvAB complex. HJ branch migration allows RuvC to scan DNA until it finds its consensus sequence, where it cleaves and resolves the cruciform DNA. This Salinibacter ruber (strain DSM 13855 / M31) protein is Holliday junction branch migration complex subunit RuvA.